A 311-amino-acid chain; its full sequence is Solute carrier family 25 member 36-A (311 aa).

Solcar repeat units lie at residues R4–K108, D116–K203, and S224–L308. The next 6 membrane-spanning stretches (helical) occupy residues L7–L27, F41–A57, N111–T131, M180–I200, F226–P246, and Q291–G311.

The protein belongs to the mitochondrial carrier (TC 2.A.29) family.

Its subcellular location is the mitochondrion inner membrane. This is Solute carrier family 25 member 36-A (slc25a36a) from Danio rerio (Zebrafish).